We begin with the raw amino-acid sequence, 853 residues long: MSSGANITYASRKRRKPVQKTVKPVPAEGIKSNPSKRHRDRLNTELDRLASLLPFPQDVINKLDKLSVLRLSVSYLRAKSFFDVALKSTPADRSRGQDQCRAQVRDWQDLQEGEFLLQALNGFVLVVTADALVFYASSTIQDYLGFQQSDVIHQSVYELIHTEDRAEFQRQLHWALNPSQCTDSAQGVDETHGLPQPAVYYTPDQLPPENTAFMERCFRCRLRCLLDNSSGFLAMNFQGRLKYLHGQNKKGKDGALLPPQLALFAIATPLQPPSILEIRTKNFIFRTKHKLDFTPIGCDAKGQLILGYTEVELCNKGSGYQFIHAADMLHCAESHIRMIKTGESGMTVFRLLAKHSRWRWVQSNARLIYRNGRPDYIIATQRPLTDEEGREHLQKRSMTLPFMFATGEAVLYEISSPFSPIMDPLPIRTKSNTSRKDWAPQSTPSKDSFHPNSLMSALIQQDESIYLCPPSSPAPLDSHFLMDSMSECGSWQGSFAVASNEALLKHEEIRHTQDVNLTLSGGPSELFPDNKNNDLYSIMRNLGIDFEDIRSMQNEEFFRTDSSGEVDFKDIDITDEILTYVQDSLNNSTLLNSACQQQPVSQHLSCMLQERLQLEQQQQLQQQHPTQTLEPQRQLCQVEVPQHELGQKTKHMQVNGMFASWNPAPPVSFSCPQQERKHYSLFSGLQGTAQEFPYKSEVDSMPYTQNFAPCNQSLLPEHSKGTQLDFPGRDFERSLHPNASNLEDFVSCLQVPENQRHGINSQSAMVSPQAYYAGAMSMYQCQAGPQHTPVDQMQYSPEIPGSQAFLSKFQSPSILNEAYSADLSSIGHLQTAAHLPRLAEAQPLPDITPSGFL.

The propeptide occupies 1–9 (MSSGANITY). The tract at residues 1-38 (MSSGANITYASRKRRKPVQKTVKPVPAEGIKSNPSKRH) is disordered. 2 short sequence motifs (nuclear localization signal) span residues 12 to 15 (RKRR) and 36 to 41 (KRHRDR). In terms of domain architecture, bHLH spans 26 to 79 (PAEGIKSNPSKRHRDRLNTELDRLASLLPFPQDVINKLDKLSVLRLSVSYLRAK). The segment at 37-65 (RHRDRLNTELDRLASLLPFPQDVINKLDK) is DNA-binding. Required for maintaining the overall integrity of the AHR:ARNT heterodimer and its transcriptional activity stretches follow at residues 49–81 (LASL…AKSF), 116–124 (LLQALNGFV), and 264–266 (FAI). Residues 63–71 (LDKLSVLRL) carry the Nuclear export signal motif. Positions 116-179 (LLQALNGFVL…RQLHWALNPS (64 aa)) constitute a PAS 1 domain. Residues 273 to 340 (PSILEIRTKN…CAESHIRMIK (68 aa)) form the PAS 2 domain. Residues 346–384 (MTVFRLLAKHSRWRWVQSNARLIYRNGRPDYIIATQRPL) enclose the PAC domain. The segment at 429–451 (TKSNTSRKDWAPQSTPSKDSFHP) is disordered. Over residues 440–451 (PQSTPSKDSFHP) the composition is skewed to polar residues.

In terms of assembly, homodimer. Heterodimer; efficient DNA binding requires dimerization with another bHLH protein. Interacts with ARNT; the heterodimer ARNT:AHR binds to core DNA sequence 5'-TGCGTG-3' within the dioxin response element (DRE) of target gene promoters and activates their transcription. Binds MYBBP1A. Interacts with coactivators including SRC-1, RIP140 and NOCA7, and with the corepressor SMRT. Interacts with NEDD8 and IVNS1ABP. Interacts with BMAL1. Interacts with HSP90AB1. Interacts with TIPARP; leading to mono-ADP-ribosylation of AHR and subsequent inhibition of AHR. Post-translationally, mono-ADP-ribosylated, leading to inhibit transcription activator activity of AHR. As to expression, expressed in all tissues tested including brain, heart, kidney, liver, lung, spleen, skeletal muscle and thymus.

It localises to the cytoplasm. It is found in the nucleus. Its function is as follows. Ligand-activated transcription factor that enables cells to adapt to changing conditions by sensing compounds from the environment, diet, microbiome and cellular metabolism, and which plays important roles in development, immunity and cancer. Upon ligand binding, translocates into the nucleus, where it heterodimerizes with ARNT and induces transcription by binding to xenobiotic response elements (XRE). Regulates a variety of biological processes, including angiogenesis, hematopoiesis, drug and lipid metabolism, cell motility and immune modulation. Xenobiotics can act as ligands: upon xenobiotic-binding, activates the expression of multiple phase I and II xenobiotic chemical metabolizing enzyme genes (such as the CYP1A1 gene). Mediates biochemical and toxic effects of halogenated aromatic hydrocarbons. Next to xenobiotics, natural ligands derived from plants, microbiota, and endogenous metabolism are potent AHR agonists. Tryptophan (Trp) derivatives constitute an important class of endogenous AHR ligands. Acts as a negative regulator of anti-tumor immunity: indoles and kynurenic acid generated by Trp catabolism act as ligand and activate AHR, thereby promoting AHR-driven cancer cell motility and suppressing adaptive immunity. Regulates the circadian clock by inhibiting the basal and circadian expression of the core circadian component PER1. Inhibits PER1 by repressing the CLOCK-BMAL1 heterodimer mediated transcriptional activation of PER1. The heterodimer ARNT:AHR binds to core DNA sequence 5'-TGCGTG-3' within the dioxin response element (DRE) of target gene promoters and activates their transcription. The protein is Aryl hydrocarbon receptor (Ahr) of Rattus norvegicus (Rat).